Here is a 427-residue protein sequence, read N- to C-terminus: MENFVDENGFASLNQNIFTRDQEHMKEEDFPFEVVDQSKPTSFLQDFHHLDHDHQFDHHHHHGSSSSHPLLSVQTTSSCINNAPFEHCSYQENMVDFYETKPNLMNHHHFQAVENSYFTRNHHHHQEINLVDEHDDPMDLEQNNMMMMRMIPFDYPPTETFKPMNFVMPDEISCVSADNDCYRATSFNKTKPFLTRKLSSSSSSSSWKETKKSTLVKGQWTAEEDRVLIQLVEKYGLRKWSHIAQVLPGRIGKQCRERWHNHLRPDIKKETWSEEEDRVLIEFHKEIGNKWAEIAKRLPGRTENSIKNHWNATKRRQFSKRKCRSKYPRPSLLQDYIKSLNMGALMASSVPARGRRRESNNKKKDVVVAVEEKKKEEEVYGQDRIVPECVFTDDFGFNEKLLEEGCSIDSLLDDIPQPDIDAFVHGL.

Positions Thr195 to Ser202 match the Nuclear localization signal 1 motif. HTH myb-type domains are found at residues Lys212–Ile267 and Lys268–Phe318. 2 DNA-binding regions (H-T-H motif) span residues Trp240–Leu263 and Trp291–Lys314. The short motif at Asn361–Val368 is the Nuclear localization signal 2 element.

In terms of tissue distribution, expressed at high levels in the synergid cells of the female gametophyte, and at lower levels in the endosperm of young seeds and the trichomes of young leaves and sepals.

Its subcellular location is the nucleus. Transcription factor that binds to the motif 5'-GTAACNT-3' in the promoter of target genes (e.g. DD11 and DD18) and promotes their expression within synergid cells (e.g. in the filiform apparatus) in ovules. Required for the formation of the filiform apparatus during synergid cell differentiation in the female gametophyte. Involved in pollen tube guidance to the micropyle. This Arabidopsis thaliana (Mouse-ear cress) protein is Transcription factor MYB98.